The following is a 394-amino-acid chain: Aspergillopepsin-1 (394 aa).

The N-terminal stretch at Met1–Ala20 is a signal peptide. Positions Ala21 to Ala69 are cleaved as a propeptide — activation peptide. In terms of domain architecture, Peptidase A1 spans Tyr85–Ala391. Residue Asp101 is part of the active site. O-linked (Man...) serine glycosylation is found at Ser129 and Ser304. A disulfide bond links Cys319 and Cys354.

It belongs to the peptidase A1 family. As to quaternary structure, monomer.

It localises to the secreted. It carries out the reaction Hydrolysis of proteins with broad specificity. Generally favors hydrophobic residues in P1 and P1', but also accepts Lys in P1, which leads to activation of trypsinogen. Does not clot milk.. Secreted aspartic endopeptidase that allows assimilation of proteinaceous substrates. The scissile peptide bond is attacked by a nucleophilic water molecule activated by two aspartic residues in the active site. Shows a broad primary substrate specificity. Favors hydrophobic residues at the P1 and P1' positions, but also accepts a lysine residue in the P1 position, leading to the activation of trypsinogen and chymotrypsinogen A. The polypeptide is Aspergillopepsin-1 (pepA) (Aspergillus phoenicis (Aspergillus saitoi)).